Reading from the N-terminus, the 422-residue chain is Cysteate synthase (422 aa).

K105 carries the N6-(pyridoxal phosphate)lysine modification. Residues N131 and T379 each coordinate pyridoxal 5'-phosphate.

It belongs to the threonine synthase family. Cysteate synthase subfamily. In terms of assembly, homotrimer. Pyridoxal 5'-phosphate is required as a cofactor.

The catalysed reaction is O-phospho-L-serine + sulfite + H(+) = L-cysteate + phosphate. The protein operates within cofactor biosynthesis; coenzyme M biosynthesis. Specifically catalyzes the beta-elimination of phosphate from L-phosphoserine and the beta-addition of sulfite to the dehydroalanine intermediate to produce L-cysteate. The protein is Cysteate synthase of Methanospirillum hungatei JF-1 (strain ATCC 27890 / DSM 864 / NBRC 100397 / JF-1).